Reading from the N-terminus, the 265-residue chain is Insulin-like growth factor-binding protein 5 (265 aa).

An N-terminal signal peptide occupies residues 1-21 (MEMLLPMCLLLVSLCLGQCQA). The 81-residue stretch at 24–104 (SFVHCEPCDD…LHGRGVCLNL (81 aa)) folds into the IGFBP N-terminal domain. 6 cysteine pairs are disulfide-bonded: Cys-28/Cys-54, Cys-31/Cys-56, Cys-39/Cys-57, Cys-46/Cys-60, Cys-68/Cys-81, and Cys-75/Cys-101. The segment covering 111 to 121 (SKIDRESREED) has biased composition (basic and acidic residues). The segment at 111 to 137 (SKIDRESREEDPTTSETEDIYQSKHRG) is disordered. The Thyroglobulin type-1 domain maps to 182-256 (MGPCRRQVET…IDYVNGDLQC (75 aa)). 3 disulfide bridges follow: Cys-185/Cys-212, Cys-223/Cys-234, and Cys-236/Cys-256.

It is found in the secreted. In terms of biological role, IGF-binding proteins prolong the half-life of the IGFs and have been shown to either inhibit or stimulate the growth promoting effects of the IGFs on cell culture. They alter the interaction of IGFs with their cell surface receptors. Promotes anterior neural development by stimulating insulin growth factor (IGF) signaling via IGF receptors. The protein is Insulin-like growth factor-binding protein 5 of Xenopus laevis (African clawed frog).